The chain runs to 238 residues: UPF0328 protein ECU07_0010 (238 aa).

Disordered stretches follow at residues 1-154 and 211-238; these read MAAP…NTQR and GRLH…LATL. The segment covering 106–128 has biased composition (basic and acidic residues); the sequence is HTEGCHTHEANPEPNTKHTETES. Positions 129–152 are enriched in polar residues; the sequence is PKPQTSTQHHTPITIPSSLLSQNT.

It belongs to the UPF0328 family.

This Encephalitozoon cuniculi (strain GB-M1) (Microsporidian parasite) protein is UPF0328 protein ECU07_0010.